The following is a 170-amino-acid chain: Inner membrane protein p22 (170 aa).

Residues 1-3 (MST) are Intravirion-facing. Residues 4-24 (LLIALIALIVLLIIILVVFLY) traverse the membrane as a helical segment. Residues 25–170 (YKKQQPPKKV…LYLPRNHKYA (146 aa)) are Virion surface-facing.

Belongs to the asfivirus inner membrane protein p22 family.

The protein localises to the virion membrane. It localises to the host cell membrane. The protein is Inner membrane protein p22 of Ornithodoros (relapsing fever ticks).